Reading from the N-terminus, the 295-residue chain is Fatty acid desaturase 4-like 1, chloroplastic (295 aa).

Residues 1 to 29 constitute a chloroplast transit peptide; that stretch reads MAVSFQTKNPLRPITNIPRSYGPTRVRVT. The next 3 membrane-spanning stretches (helical) occupy residues 72–92, 102–122, and 175–195; these read WVAA…IGGF, LACY…HWAI, and LAIN…CILL.

The protein belongs to the fatty acid desaturase CarF family.

It is found in the plastid. It localises to the chloroplast membrane. The protein operates within lipid metabolism; fatty acid metabolism. Functionally, fatty acid desaturase involved in the production of chloroplast-specific phosphatidylglycerol molecular species. Catalyzes the formation of a trans double bond introduced close to the carboxyl group of palmitic acid, which is specifically esterified to the sn-2 glyceryl carbon of phosphatidylglycerol. The chain is Fatty acid desaturase 4-like 1, chloroplastic (FAD4L1) from Arabidopsis thaliana (Mouse-ear cress).